The following is a 714-amino-acid chain: Fatty acid oxidation complex subunit alpha (714 aa).

Residues 1 to 190 (MEMASAFTLN…KLGLVDDVVP (190 aa)) form an enoyl-CoA hydratase region. The tract at residues 306–714 (APLNSVGILG…FWKTTATDLQ (409 aa)) is 3-hydroxyacyl-CoA dehydrogenase.

It in the N-terminal section; belongs to the enoyl-CoA hydratase/isomerase family. This sequence in the central section; belongs to the 3-hydroxyacyl-CoA dehydrogenase family. Heterotetramer of two alpha chains (FadJ) and two beta chains (FadI).

It is found in the cytoplasm. The enzyme catalyses a (3S)-3-hydroxyacyl-CoA = a (2E)-enoyl-CoA + H2O. It catalyses the reaction a 4-saturated-(3S)-3-hydroxyacyl-CoA = a (3E)-enoyl-CoA + H2O. It carries out the reaction a (3S)-3-hydroxyacyl-CoA + NAD(+) = a 3-oxoacyl-CoA + NADH + H(+). The catalysed reaction is (3S)-3-hydroxybutanoyl-CoA = (3R)-3-hydroxybutanoyl-CoA. It functions in the pathway lipid metabolism; fatty acid beta-oxidation. In terms of biological role, catalyzes the formation of a hydroxyacyl-CoA by addition of water on enoyl-CoA. Also exhibits 3-hydroxyacyl-CoA epimerase and 3-hydroxyacyl-CoA dehydrogenase activities. This Escherichia coli O81 (strain ED1a) protein is Fatty acid oxidation complex subunit alpha.